The primary structure comprises 448 residues: Adenylosuccinate synthetase (448 aa).

GTP is bound by residues 22 to 28 (GDEGKGK) and 50 to 52 (GHT). Asp-23 functions as the Proton acceptor in the catalytic mechanism. Mg(2+) is bound by residues Asp-23 and Gly-50. IMP contacts are provided by residues 23–26 (DEGK), 48–51 (NAGH), Thr-139, Arg-153, Gln-234, Thr-249, and Arg-321. Residue His-51 is the Proton donor of the active site. Residue 317–323 (SVTGRPR) participates in substrate binding. GTP contacts are provided by residues Arg-323, 349–351 (KLD), and 431–433 (STG).

It belongs to the adenylosuccinate synthetase family. As to quaternary structure, homodimer. Mg(2+) serves as cofactor.

The protein resides in the cytoplasm. It carries out the reaction IMP + L-aspartate + GTP = N(6)-(1,2-dicarboxyethyl)-AMP + GDP + phosphate + 2 H(+). It functions in the pathway purine metabolism; AMP biosynthesis via de novo pathway; AMP from IMP: step 1/2. Plays an important role in the de novo pathway of purine nucleotide biosynthesis. Catalyzes the first committed step in the biosynthesis of AMP from IMP. This Paraburkholderia phymatum (strain DSM 17167 / CIP 108236 / LMG 21445 / STM815) (Burkholderia phymatum) protein is Adenylosuccinate synthetase.